A 168-amino-acid chain; its full sequence is uncharacterized protein (168 aa).

Residues 36 to 56 (LNWWQLIVVVGIAISGIAAIA) form a helical membrane-spanning segment. N-linked (GlcNAc...) asparagine; by host glycosylation is present at Asn-74. Transmembrane regions (helical) follow at residues 86 to 106 (FIIIIVLSCLAVVGGIILAWL), 115 to 135 (KLLTMGLTTGGILGILYALTI), and 143 to 163 (MVKLGISWVSLLAFVLLGFFI). N-linked (GlcNAc...) asparagine; by host glycosylation occurs at Asn-164.

It localises to the membrane. This is an uncharacterized protein from Acanthamoeba polyphaga mimivirus (APMV).